The following is a 178-amino-acid chain: uncharacterized protein (178 aa).

This is an uncharacterized protein from Cestrum parqui (CmYLCV).